The chain runs to 98 residues: Large ribosomal subunit protein bL28 (98 aa).

Belongs to the bacterial ribosomal protein bL28 family.

This chain is Large ribosomal subunit protein bL28, found in Thermus thermophilus (strain ATCC BAA-163 / DSM 7039 / HB27).